Reading from the N-terminus, the 64-residue chain is MVENPMVINNWHDKLTETDVQIDFYGDEVTPVDDYVIDGGEIILRENLERYLREQLGFEFKNAQ.

This is an uncharacterized protein from Bacillus subtilis (strain 168).